The primary structure comprises 249 residues: Dihydroneopterin 2',3'-cyclic phosphate phosphodiesterase (249 aa).

One can recognise an HD domain in the interval 58–172 (LIEHTISVTK…VHYADEADSK (115 aa)).

In terms of assembly, homododecamer. Requires Fe(2+) as cofactor. Zn(2+) serves as cofactor.

The enzyme catalyses 7,8-dihydroneopterin 2',3'-cyclic phosphate + H2O = 7,8-dihydroneopterin 3'-phosphate + H(+). The catalysed reaction is 7,8-dihydroneopterin 2',3'-cyclic phosphate + H2O = 7,8-dihydroneopterin 2'-phosphate + H(+). It participates in cofactor biosynthesis; 5,6,7,8-tetrahydromethanopterin biosynthesis. Cyclic phosphodiesterase that hydrolyzes the cyclic phosphate of 7,8-dihydroneopterin 2',3'-cyclic phosphate (H2N-cP) and converts it to a mixture of 7,8-dihydroneopterin 2'-phosphate (H2N-2'P) and 7,8-dihydroneopterin 3'-phosphate (H2N-3'P). Is also able to utilize other phosphodiesters as substrates in vitro: hydrolysis of bis-pNPP and pNPPC produces nitrophenyl phosphate, and that of 2',3'-cAMP produces 3'-AMP. ATP, 3',5'-cAMP, GTP, 3',5'-cGMP, and 4',5'-cFMN cannot serve as substrates. The protein is Dihydroneopterin 2',3'-cyclic phosphate phosphodiesterase (mptB) of Methanocaldococcus jannaschii (strain ATCC 43067 / DSM 2661 / JAL-1 / JCM 10045 / NBRC 100440) (Methanococcus jannaschii).